Reading from the N-terminus, the 635-residue chain is Chaperone protein HtpG (635 aa).

The tract at residues 1–344 is a; substrate-binding; it reads MSETATTNKE…SNDLPLNVSR (344 aa). Residues 345 to 561 form a b region; that stretch reads EILQDNKITQ…DYEMGTQMAK (217 aa). The interval 562–635 is c; that stretch reads LLAAAGQPVP…AVNQLLAPSH (74 aa).

Belongs to the heat shock protein 90 family. Homodimer.

Its subcellular location is the cytoplasm. Molecular chaperone. Has ATPase activity. This Vibrio cholerae serotype O1 (strain ATCC 39541 / Classical Ogawa 395 / O395) protein is Chaperone protein HtpG.